Reading from the N-terminus, the 333-residue chain is Protoheme IX farnesyltransferase (333 aa).

Helical transmembrane passes span 64 to 84 (LICTLGGGALAAAAAGALNCL), 110 to 130 (TVFLAAVSCTLAASMLLVSGV), 133 to 153 (LAAGLTLLGLFSYVILYTVIL), 161 to 181 (IVFGGVAGAIPPLVGASAATG), 189 to 209 (WLFGLVMLWTPAHFWALAILL), 246 to 266 (IMGVFALPEGGLLYGIMLLPF), and 287 to 307 (AKSLFRWSILYMFGICLLLLI).

It belongs to the UbiA prenyltransferase family. Protoheme IX farnesyltransferase subfamily.

It localises to the cell inner membrane. It catalyses the reaction heme b + (2E,6E)-farnesyl diphosphate + H2O = Fe(II)-heme o + diphosphate. The protein operates within porphyrin-containing compound metabolism; heme O biosynthesis; heme O from protoheme: step 1/1. In terms of biological role, converts heme B (protoheme IX) to heme O by substitution of the vinyl group on carbon 2 of heme B porphyrin ring with a hydroxyethyl farnesyl side group. The protein is Protoheme IX farnesyltransferase of Prochlorococcus marinus (strain AS9601).